The primary structure comprises 592 residues: Cryptochrome-2 (592 aa).

Positions 21–150 (ASSVHWFRKG…EVVTENSHTL (130 aa)) constitute a Photolyase/cryptochrome alpha/beta domain. Residue Lys-29 forms a Glycyl lysine isopeptide (Lys-Gly) (interchain with G-Cter in ubiquitin) linkage. Residue Ser-89 is modified to Phosphoserine. Residues Lys-125 and Lys-241 each participate in a glycyl lysine isopeptide (Lys-Gly) (interchain with G-Cter in ubiquitin) cross-link. A Phosphoserine; by MAPK modification is found at Ser-265. Ser-270 contributes to the FAD binding site. Ser-298 is modified (phosphoserine). Position 307 (Gln-307) interacts with FAD. Residue Lys-347 forms a Glycyl lysine isopeptide (Lys-Gly) (interchain with G-Cter in ubiquitin) linkage. Residues His-373 and 405–407 (DAD) contribute to the FAD site. The interval 389-488 (WVSWESGVRV…IIGVDYPRPI (100 aa)) is required for inhibition of CLOCK-BMAL1-mediated transcription. Glycyl lysine isopeptide (Lys-Gly) (interchain with G-Cter in ubiquitin) cross-links involve residues Lys-474 and Lys-503. Residues 532 to 592 (VAEPGSSQAG…PTQEPASKDS (61 aa)) form a disordered region. Positions 536-547 (GSSQAGSISNTG) are enriched in polar residues. Ser-553 carries the post-translational modification Phosphoserine; by GSK3-beta. A Phosphoserine; by DYRK1A and MAPK modification is found at Ser-557. Residues 582–592 (MPTQEPASKDS) show a composition bias toward polar residues.

The protein belongs to the DNA photolyase class-1 family. As to quaternary structure, component of the circadian core oscillator, which includes the CRY proteins, CLOCK or NPAS2, BMAL1 or BMAL2, CSNK1D and/or CSNK1E, TIMELESS, and the PER proteins. Interacts with TIMELESS. Interacts directly with PER1, PER2 and PER3; interaction with PER2 inhibits its ubiquitination and vice versa. Interacts with CLOCK-BMAL1. Interacts with BMAL1. Interacts with CLOCK. Interacts with NFIL3. Interacts with FBXL3 and FBXL21. FBXL3, PER2 and the cofactor FAD compete for overlapping binding sites. FBXL3 cannot bind CRY2 that interacts already with PER2 or that contains bound FAD. Interacts with PPP5C (via TPR repeats); the interaction down-regulates the PPP5C phosphatase activity on CSNK1E. Interacts with nuclear receptors AR and NR3C1/GR; the interaction is ligand dependent. Interacts with PRKDC. Interacts with CIART. Interacts with DDB1, USP7 and TARDBP. Interacts with HNF4A. Interacts with PPARA. Interacts with PPARG in a ligand-dependent manner. Interacts with PPARD (via domain NR LBD) in a ligand-dependent manner. Interacts with NR1I2 (via domain NR LBD) in a ligand-dependent manner. Interacts with NR1I3 and VDR in a ligand-dependent manner. Requires FAD as cofactor. (6R)-5,10-methylene-5,6,7,8-tetrahydrofolate serves as cofactor. Post-translationally, phosphorylation on Ser-265 by MAPK is important for the inhibition of CLOCK-BMAL1-mediated transcriptional activity. Phosphorylation by CSKNE requires interaction with PER1 or PER2. Phosphorylated in a circadian manner at Ser-553 and Ser-557 in the suprachiasmatic nucleus (SCN) and liver. Phosphorylation at Ser-557 by DYRK1A promotes subsequent phosphorylation at Ser-553 by GSK3-beta: the two-step phosphorylation at the neighboring Ser residues leads to its proteasomal degradation. In terms of processing, ubiquitinated by the SCF(FBXL3) and SCF(FBXL21) complexes, regulating the balance between degradation and stabilization. The SCF(FBXL3) complex is mainly nuclear and mediates ubiquitination and subsequent degradation of CRY2. In contrast, cytoplasmic SCF(FBXL21) complex-mediated ubiquitination leads to stabilize CRY2 and counteract the activity of the SCF(FBXL3) complex. The SCF(FBXL3) and SCF(FBXL21) complexes probably mediate ubiquitination at different Lys residues. The SCF(FBXL3) complex recognizes and binds CRY2 phosphorylated at Ser-553 and Ser-557. Ubiquitination may be inhibited by PER2. Deubiquitinated by USP7. In terms of tissue distribution, expression in the retina is restricted to the photoreceptor layer (at protein level). Expressed in all tissues examined including heart, brain, spleen, lung, liver, skeletal muscle, kidney and testis. Weak expression in spleen.

The protein localises to the cytoplasm. The protein resides in the nucleus. Its activity is regulated as follows. KL001 (N-[3-(9H-carbazol-9-yl)-2-hydroxypropyl]-N-(2-furanylmethyl)-methanesulfonamide) binds to CRY1 and stabilizes it by inhibiting FBXL3- and ubiquitin-dependent degradation of CRY1 resulting in lengthening of the circadian periods. KL001-mediated CRY1 stabilization can inhibit glucagon-induced gluconeogenesis in primary hepatocytes. Transcriptional repressor which forms a core component of the circadian clock. The circadian clock, an internal time-keeping system, regulates various physiological processes through the generation of approximately 24 hour circadian rhythms in gene expression, which are translated into rhythms in metabolism and behavior. It is derived from the Latin roots 'circa' (about) and 'diem' (day) and acts as an important regulator of a wide array of physiological functions including metabolism, sleep, body temperature, blood pressure, endocrine, immune, cardiovascular, and renal function. Consists of two major components: the central clock, residing in the suprachiasmatic nucleus (SCN) of the brain, and the peripheral clocks that are present in nearly every tissue and organ system. Both the central and peripheral clocks can be reset by environmental cues, also known as Zeitgebers (German for 'timegivers'). The predominant Zeitgeber for the central clock is light, which is sensed by retina and signals directly to the SCN. The central clock entrains the peripheral clocks through neuronal and hormonal signals, body temperature and feeding-related cues, aligning all clocks with the external light/dark cycle. Circadian rhythms allow an organism to achieve temporal homeostasis with its environment at the molecular level by regulating gene expression to create a peak of protein expression once every 24 hours to control when a particular physiological process is most active with respect to the solar day. Transcription and translation of core clock components (CLOCK, NPAS2, BMAL1, BMAL2, PER1, PER2, PER3, CRY1 and CRY2) plays a critical role in rhythm generation, whereas delays imposed by post-translational modifications (PTMs) are important for determining the period (tau) of the rhythms (tau refers to the period of a rhythm and is the length, in time, of one complete cycle). A diurnal rhythm is synchronized with the day/night cycle, while the ultradian and infradian rhythms have a period shorter and longer than 24 hours, respectively. Disruptions in the circadian rhythms contribute to the pathology of cardiovascular diseases, cancer, metabolic syndromes and aging. A transcription/translation feedback loop (TTFL) forms the core of the molecular circadian clock mechanism. Transcription factors, CLOCK or NPAS2 and BMAL1 or BMAL2, form the positive limb of the feedback loop, act in the form of a heterodimer and activate the transcription of core clock genes and clock-controlled genes (involved in key metabolic processes), harboring E-box elements (5'-CACGTG-3') within their promoters. The core clock genes: PER1/2/3 and CRY1/2 which are transcriptional repressors form the negative limb of the feedback loop and interact with the CLOCK|NPAS2-BMAL1|BMAL2 heterodimer inhibiting its activity and thereby negatively regulating their own expression. This heterodimer also activates nuclear receptors NR1D1/2 and RORA/B/G, which form a second feedback loop and which activate and repress BMAL1 transcription, respectively. CRY1 and CRY2 have redundant functions but also differential and selective contributions at least in defining the pace of the SCN circadian clock and its circadian transcriptional outputs. Less potent transcriptional repressor in cerebellum and liver than CRY1, though less effective in lengthening the period of the SCN oscillator. Seems to play a critical role in tuning SCN circadian period by opposing the action of CRY1. With CRY1, dispensable for circadian rhythm generation but necessary for the development of intercellular networks for rhythm synchrony. May mediate circadian regulation of cAMP signaling and gluconeogenesis by blocking glucagon-mediated increases in intracellular cAMP concentrations and in CREB1 phosphorylation. Besides its role in the maintenance of the circadian clock, is also involved in the regulation of other processes. Plays a key role in glucose and lipid metabolism modulation, in part, through the transcriptional regulation of genes involved in these pathways, such as LEP or ACSL4. Represses glucocorticoid receptor NR3C1/GR-induced transcriptional activity by binding to glucocorticoid response elements (GREs). Represses the CLOCK-BMAL1 induced transcription of BHLHE40/DEC1 and NAMPT. Represses PPARD and its target genes in the skeletal muscle and limits exercise capacity. Represses the transcriptional activity of NR1I2. In Mus musculus (Mouse), this protein is Cryptochrome-2 (Cry2).